The following is a 469-amino-acid chain: Siroheme synthase (469 aa).

Positions 1 to 203 are precorrin-2 dehydrogenase /sirohydrochlorin ferrochelatase; the sequence is MDYLPIFTDL…GQEQDAKQEL (203 aa). Residues 22–23 and 43–44 contribute to the NAD(+) site; these read DV and PV. Serine 128 is modified (phosphoserine). The segment at 214–469 is uroporphyrinogen-III C-methyltransferase; that stretch reads GQVALIGSGP…LQQSAVVKLA (256 aa). S-adenosyl-L-methionine is bound at residue proline 223. The active-site Proton acceptor is the aspartate 246. The active-site Proton donor is lysine 268. Residues 299–301, valine 304, 329–330, methionine 381, and glycine 410 contribute to the S-adenosyl-L-methionine site; these read GGD and TA.

In the N-terminal section; belongs to the precorrin-2 dehydrogenase / sirohydrochlorin ferrochelatase family. The protein in the C-terminal section; belongs to the precorrin methyltransferase family.

It carries out the reaction uroporphyrinogen III + 2 S-adenosyl-L-methionine = precorrin-2 + 2 S-adenosyl-L-homocysteine + H(+). The catalysed reaction is precorrin-2 + NAD(+) = sirohydrochlorin + NADH + 2 H(+). The enzyme catalyses siroheme + 2 H(+) = sirohydrochlorin + Fe(2+). It functions in the pathway cofactor biosynthesis; adenosylcobalamin biosynthesis; precorrin-2 from uroporphyrinogen III: step 1/1. The protein operates within cofactor biosynthesis; adenosylcobalamin biosynthesis; sirohydrochlorin from precorrin-2: step 1/1. It participates in porphyrin-containing compound metabolism; siroheme biosynthesis; precorrin-2 from uroporphyrinogen III: step 1/1. Its pathway is porphyrin-containing compound metabolism; siroheme biosynthesis; siroheme from sirohydrochlorin: step 1/1. It functions in the pathway porphyrin-containing compound metabolism; siroheme biosynthesis; sirohydrochlorin from precorrin-2: step 1/1. In terms of biological role, multifunctional enzyme that catalyzes the SAM-dependent methylations of uroporphyrinogen III at position C-2 and C-7 to form precorrin-2 via precorrin-1. Then it catalyzes the NAD-dependent ring dehydrogenation of precorrin-2 to yield sirohydrochlorin. Finally, it catalyzes the ferrochelation of sirohydrochlorin to yield siroheme. This chain is Siroheme synthase, found in Photobacterium profundum (strain SS9).